The following is a 273-amino-acid chain: MTFDDLKIQTVKDQPDEKSNGKKAKGLQFLYSPWWCLAAATLGVLCLGLVVTIMVLGMQLSQVSDLLTQEQANLTHQKKKLEGQISARQQAEEASQESENELKEMIETLARKLNEKSKEQMELHHQNLNLQETLKRVANCSAPCPQDWIWHGENCYLFSSGSFNWEKSQEKCLSLDAKLLKINSTADLDFIQQAISYSSFPFWMGLSRRNPSYPWLWEDGSPLMPHLFRVRGAVSQTYPSGTCAYIQRGAVYAENCILAAFSICQKKANLRAQ.

The disordered stretch occupies residues 1–22; it reads MTFDDLKIQTVKDQPDEKSNGK. Over 1 to 36 the chain is Cytoplasmic; sequence MTFDDLKIQTVKDQPDEKSNGKKAKGLQFLYSPWWC. 2 S-palmitoyl cysteine lipidation sites follow: Cys-36 and Cys-46. Residues 37-57 traverse the membrane as a helical; Signal-anchor for type II membrane protein segment; it reads LAAATLGVLCLGLVVTIMVLG. The tract at residues 58–150 is neck; it reads MQLSQVSDLL…SAPCPQDWIW (93 aa). Residues 58–273 are Extracellular-facing; sequence MQLSQVSDLL…CQKKANLRAQ (216 aa). Residues 64–123 adopt a coiled-coil conformation; it reads SDLLTQEQANLTHQKKKLEGQISARQQAEEASQESENELKEMIETLARKLNEKSKEQMEL. The N-linked (GlcNAc...) asparagine glycan is linked to Asn-73. Asn-139 is a glycosylation site (N-linked (GlcNAc...) (complex) asparagine). Disulfide bonds link Cys-144-Cys-155, Cys-172-Cys-264, and Cys-243-Cys-256. The region spanning 151–265 is the C-type lectin domain; the sequence is HGENCYLFSS…CILAAFSICQ (115 aa).

Homodimer; disulfide-linked. May form a hexamer composed of 3 homodimers. Interacts with HSP70. As to quaternary structure, (Microbial infection) Binds to the head and beginning of the coiled stalk of N.meningitidis adhesin A (nadA) variant 3; binding can be abrogated by monoclonal antibodies against the specific regions of NadA. Binding occurs in protein microarrays, in solution and when LOX-1 is expressed on the cell surface. In terms of processing, the intrachain disulfide-bonds prevent N-glycosylation at some sites. N-glycosylated. Expressed at high level in endothelial cells and vascular-rich organs such as placenta, lung, liver and brain, aortic intima, bone marrow, spinal cord and substantia nigra. Also expressed at the surface of dendritic cells. Widely expressed at intermediate and low level.

It is found in the cell membrane. Its subcellular location is the membrane raft. It localises to the secreted. Its function is as follows. Receptor that mediates the recognition, internalization and degradation of oxidatively modified low density lipoprotein (oxLDL) by vascular endothelial cells. OxLDL is a marker of atherosclerosis that induces vascular endothelial cell activation and dysfunction, resulting in pro-inflammatory responses, pro-oxidative conditions and apoptosis. Its association with oxLDL induces the activation of NF-kappa-B through an increased production of intracellular reactive oxygen and a variety of pro-atherogenic cellular responses including a reduction of nitric oxide (NO) release, monocyte adhesion and apoptosis. In addition to binding oxLDL, it acts as a receptor for the HSP70 protein involved in antigen cross-presentation to naive T-cells in dendritic cells, thereby participating in cell-mediated antigen cross-presentation. Also involved in inflammatory process, by acting as a leukocyte-adhesion molecule at the vascular interface in endotoxin-induced inflammation. Also acts as a receptor for advanced glycation end (AGE) products, activated platelets, monocytes, apoptotic cells and both Gram-negative and Gram-positive bacteria. (Microbial infection) May serve as a receptor for adhesin A variant 3 (nadA) of N.meningitidis. The chain is Oxidized low-density lipoprotein receptor 1 (OLR1) from Homo sapiens (Human).